A 437-amino-acid polypeptide reads, in one-letter code: GTPase Obg (437 aa).

The region spanning 2–160 (SMFLDTAKIS…RELQLELKIL (159 aa)) is the Obg domain. Positions 127–146 (GNIRFATPRNPAPEIAENGE) are disordered. In terms of domain architecture, OBG-type G spans 161–338 (ADVGLVGFPS…LLEATAELLD (178 aa)). GTP-binding positions include 167 to 174 (GFPSVGKS), 192 to 196 (FTTIV), 214 to 217 (DLPG), 284 to 287 (NKMD), and 319 to 321 (SSL). 2 residues coordinate Mg(2+): S174 and T194. Residues 359-437 (GFNEEERPFE…IGNFEFEFVD (79 aa)) enclose the OCT domain.

It belongs to the TRAFAC class OBG-HflX-like GTPase superfamily. OBG GTPase family. In terms of assembly, monomer. Requires Mg(2+) as cofactor.

The protein localises to the cytoplasm. Its function is as follows. An essential GTPase which binds GTP, GDP and possibly (p)ppGpp with moderate affinity, with high nucleotide exchange rates and a fairly low GTP hydrolysis rate. Plays a role in control of the cell cycle, stress response, ribosome biogenesis and in those bacteria that undergo differentiation, in morphogenesis control. This chain is GTPase Obg, found in Streptococcus thermophilus (strain ATCC BAA-491 / LMD-9).